The primary structure comprises 21 residues: Cupiennin-6d (21 aa).

Ser21 carries the post-translational modification Serine amide.

Expressed by the venom gland.

The protein localises to the secreted. In Cupiennius salei (American wandering spider), this protein is Cupiennin-6d.